A 509-amino-acid chain; its full sequence is Maturase K (509 aa).

The protein belongs to the intron maturase 2 family. MatK subfamily.

It localises to the plastid. The protein localises to the chloroplast. In terms of biological role, usually encoded in the trnK tRNA gene intron. Probably assists in splicing its own and other chloroplast group II introns. The sequence is that of Maturase K from Thujopsis dolabrata (Hiba arborvitae).